We begin with the raw amino-acid sequence, 188 residues long: Archaemetzincin (188 aa).

Zn(2+) is bound at residue His137. Glu138 serves as the catalytic Proton acceptor. Zn(2+) contacts are provided by His141, His147, Cys148, Cys153, Cys172, and Cys175.

The protein belongs to the peptidase M54 family. As to quaternary structure, monomer. Requires Zn(2+) as cofactor.

Functionally, probable zinc metalloprotease whose natural substrate is unknown. The polypeptide is Archaemetzincin (Pyrococcus abyssi (strain GE5 / Orsay)).